We begin with the raw amino-acid sequence, 5588 residues long: Histone-lysine N-methyltransferase 2D (5588 aa).

The tract at residues 1–61 (MDSQKPPAED…QKPPHDCSRG (61 aa)) is disordered. Residues 104 to 149 (GPCEAVLPKEDASQIGFPEGLTPAHLGEPGGHCWAHHWCAAWSAGV) form a C2HC pre-PHD-type 1; degenerate zinc finger. PHD-type zinc fingers lie at residues 170 to 218 (QRCS…PEHS) and 270 to 323 (CPEC…CRLC). The PHD-type 2; degenerate zinc finger occupies 226–276 (EARCAVCEGPGQLCDLLFCTSCGHHYHGACLDTALTARKRASWQCPECKVC). The segment at 229-274 (CAVCEGPGQLCDLLFCTSCGHHYHGACLDTALTARKRASWQCPECK) adopts an RING-type 1; atypical zinc-finger fold. An RING-type 2; degenerate zinc finger spans residues 276-321 (CQSCRKPGNDSKMLVCETCDKGYHTFCLKPPMEDLPAHSWKCKTCR). Disordered stretches follow at residues 438–908 (MPLL…SPII) and 922–1315 (LEYP…DDDT). The interval 439–642 (PLLPPPEESP…VSRLSPPPEE (204 aa)) is 15 X 5 AA repeats of S/P-P-P-E/P-E/A. Residues 440–463 (LLPPPEESPLSPPPEESPTSPPPE) show a composition bias toward pro residues. Tandem repeats lie at residues 442–446 (PPPEE), 460–464 (PPPEA), 469–473 (PPTEE), and 477–481 (SPPPE). Over residues 464–475 (ASRLSPPTEESP) the composition is skewed to low complexity. Composition is skewed to pro residues over residues 490–512 (GCPP…PLSP) and 519–560 (LSPP…PPPE). Repeat copies occupy residues 520–524 (SPPPE), 529–533 (SPPPE), 538–542 (SPPPE), and 547–551 (SPPPE). Low complexity predominate over residues 561–572 (ASRLFPPFEESP). The span at 573–614 (LSPPPEDSPLSPPPEASRLSPPPEDSPMSPPPEDSPMSPPPE) shows a compositional bias: pro residues. 4 consecutive repeat copies span residues 574–578 (SPPPE), 583–587 (SPPPE), 592–596 (SPPPE), and 610–614 (SPPPE). The span at 619–636 (LPLPVLSHLSPLPEVSRL) shows a compositional bias: low complexity. Repeat unit 15 spans residues 637 to 641 (SPPPE). Over residues 637 to 677 (SPPPEESPLSPPPEDSPASPPPEASRLSPPPEDSPASPPPE) the composition is skewed to pro residues. Over residues 696 to 712 (DSLVSLPMEESPLSPLP) the composition is skewed to low complexity. S727 bears the Phosphoserine mark. Low complexity-rich tracts occupy residues 735–755 (LCPQ…CLSP), 836–851 (PSQS…FSPS), and 876–893 (LPEE…LSPQ). Composition is skewed to pro residues over residues 894–908 (LMPP…SPII), 959–973 (EPVP…PGSP), and 985–1012 (LPPP…PPAL). The segment covering 1013–1023 (PLSVPSPLSPV) has biased composition (low complexity). Basic and acidic residues predominate over residues 1033 to 1045 (AELHEMETDKGPE). 3 PHD-type zinc fingers span residues 1071–1124 (PSPA…PMEV), 1121–1171 (PMEV…SQGD), and 1198–1253 (LGVS…SPAR). The residue at position 1107 (S1107) is a Phosphoserine. Polar residues predominate over residues 1163 to 1172 (EISNLSQGDA). An RING-type 3; atypical zinc finger spans residues 1201–1251 (STDVSPARDEGSLRLCTDSLPETDDSLLCDTGTATSGGKAEGDKGRRRSSP). S1205 carries the post-translational modification Phosphoserine. T1223 carries the phosphothreonine modification. S1226 is subject to Phosphoserine. The segment covering 1245–1258 (GRRRSSPARSRIKQ) has biased composition (basic residues). Phosphoserine is present on S1562. 4 disordered regions span residues 1566–1721 (KRRQ…SKLE), 1751–1846 (GRPG…MESK), 1886–1962 (GLAL…SLQR), and 2095–2641 (SADG…QRQR). Over residues 1593–1608 (PDDKKDGDLDTDDLLK) the composition is skewed to basic and acidic residues. The residue at position 1627 (S1627) is a Phosphoserine. A compositionally biased stretch (basic and acidic residues) spans 1631 to 1641 (ELGKEETEESK). Basic residues-rich tracts occupy residues 1658-1668 (RQRKSHTRVKR) and 1709-1718 (KQQRRARKKS). The span at 1762-1782 (PRADGGSDRKELMTAMHKGDD) shows a compositional bias: basic and acidic residues. S1791 carries the post-translational modification Phosphoserine. Position 1822 is a phosphothreonine (T1822). The segment covering 1831 to 1846 (DLDRIPTEELPKMESK) has biased composition (basic and acidic residues). Composition is skewed to low complexity over residues 1886-1896 (GLALGSLPSSS) and 1936-1947 (TTPSTPTTPTTE). A compositionally biased stretch (pro residues) spans 2151-2166 (PTYPPYPSPTGAPAQP). A compositionally biased stretch (low complexity) spans 2170 to 2181 (GTTTRPGTGQPG). Residue S2196 is modified to Phosphoserine. Residue T2197 is modified to Phosphothreonine. K2203 carries the N6-acetyllysine modification. Residues S2217 and S2231 each carry the phosphoserine modification. A compositionally biased stretch (basic and acidic residues) spans 2237–2249 (ESRKSLEVKKEEL). Phosphoserine is present on residues S2266, S2268, and S2299. 2 stretches are compositionally biased toward pro residues: residues 2308-2322 (EPPP…PPSH) and 2331-2359 (YPDP…PPRS). The span at 2366 to 2388 (SRVPASPQSQSSSQSPLTPRPLS) shows a compositional bias: low complexity. Over residues 2470–2486 (GQPTNFARSPGTGTFVG) the composition is skewed to polar residues. Asymmetric dimethylarginine is present on R2492. The segment covering 2504-2514 (LKPPVPQPGLP) has biased composition (pro residues). Positions 2546–2557 (PSGSPLGPNSGP) are enriched in low complexity. Position 2597 is a phosphoserine (S2597). Over residues 2610 to 2622 (SSSSLATPELSSA) the composition is skewed to low complexity. A coiled-coil region spans residues 2627–2665 (ISSLSQTELEKQRQRQRLRELLIRQQIQRNTLRQEKETA). Residues 2644–2648 (LRELL) carry the LXXLL motif 1 motif. Residues 2655-2806 (RNTLRQEKET…QLWQQQQQQQ (152 aa)) are disordered. Low complexity predominate over residues 2665-2680 (AAAAAGAVGPPGNWGA). 2 stretches are compositionally biased toward polar residues: residues 2691-2704 (SRGQ…QDRS) and 2739-2748 (PSSMDMNSRQ). Residues 2768–2813 (LQQQQQQQQQQQQQQQQQQQQQQQQQQQQQLWQQQQQQQQQQQQQA) are a coiled coil. Positions 2769–2806 (QQQQQQQQQQQQQQQQQQQQQQQQQQQQQLWQQQQQQQ) are enriched in low complexity. R2829 carries the asymmetric dimethylarginine modification. The LXXLL motif 2 signature appears at 3030–3034 (LDDLL). The tract at residues 3069 to 3104 (NEKAEREALLRGVEPVSLGPEERPPPAPDNSEPRLT) is disordered. K3071 bears the N6-acetyllysine mark. Phosphoserine is present on residues S3122 and S3193. Disordered regions lie at residues 3129–3193 (NTPK…LNPS) and 3271–3326 (QQQQ…QSMV). The span at 3271–3284 (QQQQQQQQQQQQQQ) shows a compositional bias: low complexity. At K3430 the chain carries N6-acetyllysine. Disordered regions lie at residues 3460-3496 (SGGS…TFAQ), 3593-3617 (RNKQ…VLAV), 3633-3661 (LLPA…GGMV), and 3678-3704 (QQQQ…NLAL). A coiled-coil region spans residues 3559 to 3613 (EKLKLVTEQQSKIQKQLDQVRKQQKEHTNLMAEYRNKQQQQQQQQQQQQQQQHSA). Low complexity predominate over residues 3596 to 3610 (QQQQQQQQQQQQQQQ). The stretch at 3712–3747 (RLLQERQLQLQQQRMQLAQKLQQQQQQQQQQQQQQH) forms a coiled coil. R3725 carries the post-translational modification Asymmetric dimethylarginine. 2 disordered regions span residues 3760–3780 (PGVQ…PSNH) and 3808–3827 (LQQQ…QGPH). Coiled-coil stretches lie at residues 3854-3883 (RLLT…QQQQ) and 3912-4052 (SLQQ…QVTL). Residues 4053-4249 (GPGLPVKPLQ…QGPPGAGVMP (197 aa)) form a disordered region. 3 stretches are compositionally biased toward low complexity: residues 4128–4159 (SQLL…PQPQ), 4172–4183 (GQQLGSGSSSES), and 4226–4240 (GSQP…QSGQ). R4255 carries the post-translational modification Asymmetric dimethylarginine. S4272 carries the phosphoserine modification. The LXXLL motif 3 signature appears at 4279–4283 (LQALL). Positions 4290–4452 (QSQAVRQTPP…SSLVPGHLDQ (163 aa)) are disordered. The span at 4294–4305 (VRQTPPFQEPGT) shows a compositional bias: polar residues. The span at 4307–4322 (PSPLQGLLGCQPQPGG) shows a compositional bias: low complexity. The LXXLL motif 4 motif lies at 4310–4314 (LQGLL). Over residues 4379–4391 (QLPSPSAQLTPTH) the composition is skewed to polar residues. S4410 carries the post-translational modification Phosphoserine. Polar residues predominate over residues 4432–4445 (DNLTEAQKPEQSSL). The LXXLL motif 5 signature appears at 4514–4518 (LQKLL). K4516 is modified (N6-acetyllysine). 3 disordered regions span residues 4553-4596 (LQGT…EDGV), 4664-4716 (KNNL…EGAL), and 4729-4778 (AALP…QLGS). Residues 4670–4684 (PPTPPSSLPPTPPPS) are compositionally biased toward pro residues. S4789 is modified (phosphoserine). K4807 participates in a covalent cross-link: Glycyl lysine isopeptide (Lys-Gly) (interchain with G-Cter in SUMO2). An N6-acetyllysine modification is found at K4827. The RING-type 4; degenerate zinc-finger motif lies at 4829–4874 (KGSEVSVMLTVSAAAAKNLNGVMVAVAELLSMKIPNSYEVLFPDGP). The disordered stretch occupies residues 4877–4908 (AGLEPKKGEAEGPGGKEKGLSGKGPDTGPDWL). Residues 4879–4896 (LEPKKGEAEGPGGKEKGL) show a composition bias toward basic and acidic residues. K4931 participates in a covalent cross-link: Glycyl lysine isopeptide (Lys-Gly) (interchain with G-Cter in SUMO2). Positions 4956-5031 (QLSAPPPEEP…SEDSRPPRLK (76 aa)) are disordered. The segment covering 4959-4982 (APPPEEPSPPPSPLAPSPASPPAE) has biased composition (pro residues). The segment covering 5017 to 5027 (RPPEESEDSRP) has biased composition (basic and acidic residues). Residues 5041 to 5045 (LRLLL) carry the LXXLL motif 6 motif. The C2HC pre-PHD-type 2 zinc finger occupies 5080–5120 (NRRCCFCHEEGDGATDGPARLLNLDLDLWVHLNCALWSTEV). Residues 5141–5188 (TKCSLCQRTGATSSCNRMRCPNVYHFACAIRAKCMFFKDKTMLCPVHK) form a PHD-type 7 zinc finger. Residues 5226–5286 (LHMFRVGGLV…CCYRCSISEN (61 aa)) enclose the FYR N-terminal domain. Residues 5287 to 5372 (NGRPEFVIKV…ESCQNYLFRY (86 aa)) form the FYR C-terminal domain. Positions 5388 to 5393 (GCARSE) match the WDR5 interaction motif (WIN) motif. In terms of domain architecture, SET spans 5448–5564 (NNVYLARSRI…KGEELTYDYQ (117 aa)). Residues Y5502 and 5525–5526 (NH) each bind S-adenosyl-L-methionine. Zn(2+) contacts are provided by C5528, C5576, C5578, and C5583. One can recognise a Post-SET domain in the interval 5572 to 5588 (HKIPCHCGAWNCRKWMN).

Belongs to the class V-like SAM-binding methyltransferase superfamily. Histone-lysine methyltransferase family. TRX/MLL subfamily. As to quaternary structure, component of the MLL2 complex (also named ASCOM complex), at least composed of catalytic subunit KMT2D/MLL2, ASH2L, RBBP5, WDR5, NCOA6, DPY30, KDM6A, PAXIP1/PTIP, PAGR1 and alpha- and beta-tubulin. Forms a core complex with the evolutionary conserved subcomplex WRAD composed of WDR5, RBBP5, ASH2L/ASH2 and DPY30 subunits; WRAD differentially stimulates the methyltransferase activity. Interacts with ESR1; interaction is direct. Interacts (via WIN motif) with WDR5.

The protein localises to the nucleus. The catalysed reaction is L-lysyl(4)-[histone H3] + S-adenosyl-L-methionine = N(6)-methyl-L-lysyl(4)-[histone H3] + S-adenosyl-L-homocysteine + H(+). In terms of biological role, histone methyltransferase that catalyzes methyl group transfer from S-adenosyl-L-methionine to the epsilon-amino group of 'Lys-4' of histone H3 (H3K4). Part of chromatin remodeling machinery predominantly forms H3K4me1 methylation marks at active chromatin sites where transcription and DNA repair take place. Acts as a coactivator for estrogen receptor by being recruited by ESR1, thereby activating transcription. This is Histone-lysine N-methyltransferase 2D (Kmt2d) from Mus musculus (Mouse).